The primary structure comprises 170 residues: MPRSQRNDNFTDKTFTIVADILLRIIPTAPGEKEAFTYYRDGVMSAQSEGEYAEALQNYYEAMRPEIDPYDRSYILYNIGLIHMSNGEHTEALEYYFQALKRNPSLPQAFNNMAVICHYRGEQAIRQGDPETAEAWSDRAAEYWKQAIALAPGNYIEAQNWLKITGRLGE.

TPR repeat units follow at residues 35-69 (AFTYYRDGVMSAQSEGEYAEALQNYYEAMRPEIDP), 73-106 (SYILYNIGLIHMSNGEHTEALEYYFQALKRNPSL), and 121-154 (GEQAIRQGDPETAEAWSDRAAEYWKQAIALAPGN).

The protein belongs to the Ycf3 family.

The protein resides in the plastid. It is found in the chloroplast thylakoid membrane. Essential for the assembly of the photosystem I (PSI) complex. May act as a chaperone-like factor to guide the assembly of the PSI subunits. The protein is Photosystem I assembly protein Ycf3 of Cycas taitungensis (Prince sago).